A 116-amino-acid chain; its full sequence is NADH-ubiquinone oxidoreductase chain 3 (116 aa).

The next 3 helical transmembrane spans lie at 4–24, 56–76, and 88–108; these read LIITLIINTALSTIIVLIAFW, FFLIAITFLLFDLEIALLLPL, and TLILAYCLIILLTAGLAYEWI.

Belongs to the complex I subunit 3 family. Core subunit of respiratory chain NADH dehydrogenase (Complex I) which is composed of 45 different subunits. Interacts with TMEM186. Interacts with TMEM242.

The protein localises to the mitochondrion inner membrane. It carries out the reaction a ubiquinone + NADH + 5 H(+)(in) = a ubiquinol + NAD(+) + 4 H(+)(out). Its function is as follows. Core subunit of the mitochondrial membrane respiratory chain NADH dehydrogenase (Complex I) which catalyzes electron transfer from NADH through the respiratory chain, using ubiquinone as an electron acceptor. Essential for the catalytic activity of complex I. In Osphranter robustus (Wallaroo), this protein is NADH-ubiquinone oxidoreductase chain 3.